Reading from the N-terminus, the 1292-residue chain is ABC multidrug transporter MDR5 (1292 aa).

Residues 1-43 (MTEEPKPVTPVLRDGEAGLDTTAPTEAGSLGEEAPKKEADGIV) are disordered. Transmembrane regions (helical) follow at residues 79–99 (ICGFFAAVASGTALPLMTIIF) and 128–148 (LWFVYLFIGKFALVYIHTICF). An ABC transmembrane type-1 1 domain is found at 81 to 370 (GFFAAVASGT…IAPTLGEFTK (290 aa)). N149 carries an N-linked (GlcNAc...) asparagine glycan. Helical transmembrane passes span 202 to 222 (VGTCCQGVAMLISAFVVAFTQ), 226 to 246 (LTLPVATSIPTAVTLVGITVA), 314 to 334 (EFFIMYCAYALAFWYGIKLLL), and 344 to 364 (ILTVLFSIVIGTSSLTMIAPT). Positions 405–650 (LELSNAVFSY…KGQYWSLVNA (246 aa)) constitute an ABC transporter 1 domain. Residue 440–447 (GASGSGKS) coordinates ATP. N-linked (GlcNAc...) asparagine glycosylation is present at N494. The disordered stretch occupies residues 656 to 691 (ASDDSSSDTDKETDTQPAEILEKHATTKSTHSKVPH). Residues 663–680 (DTDKETDTQPAEILEKHA) show a composition bias toward basic and acidic residues. Transmembrane regions (helical) follow at residues 720 to 740 (HWLFFLLGGIASVVSGGAFPA) and 768 to 788 (LMFFVLALCILLTYASIGFFL). Residues 725-1012 (LLGGIASVVS…IFGFTMNTTK (288 aa)) form the ABC transmembrane type-1 2 domain. N-linked (GlcNAc...) asparagine glycosylation occurs at N820. 4 helical membrane-spanning segments follow: residues 844 to 864 (IGLILIVIVSLLAVSLLALVT), 866 to 886 (WKLALVSLFGCLPPLFLAGFI), 949 to 969 (IAMIFFGFSDSVDTAAMALAF), and 986 to 1006 (FFVIFIAVIFGGQAAGFIFGF). 3 N-linked (GlcNAc...) asparagine glycosylation sites follow: N1009, N1031, and N1052. Residues 1048–1285 (VEFRNVSFSY…KGRYFEMCKA (238 aa)) form the ABC transporter 2 domain. 1083-1090 (GPSGCGKT) provides a ligand contact to ATP.

It belongs to the ABC transporter superfamily. ABCB family. Multidrug resistance exporter (TC 3.A.1.201) subfamily.

The protein localises to the cell membrane. The catalysed reaction is itraconazole(in) + ATP + H2O = itraconazole(out) + ADP + phosphate + H(+). In terms of biological role, pleiotropic ABC efflux transporter involved in the modulation susceptibility to itraconazole. The sequence is that of ABC multidrug transporter MDR5 from Trichophyton rubrum (strain ATCC MYA-4607 / CBS 118892) (Athlete's foot fungus).